The primary structure comprises 172 residues: Co-chaperone protein HscB homolog (172 aa).

Positions 2–69 (NHFELFNLPV…DSRAAYLLAL (68 aa)) constitute a J domain.

This sequence belongs to the HscB family. As to quaternary structure, interacts with HscA and stimulates its ATPase activity.

Co-chaperone involved in the maturation of iron-sulfur cluster-containing proteins. Seems to help targeting proteins to be folded toward HscA. The polypeptide is Co-chaperone protein HscB homolog (Acinetobacter baumannii (strain SDF)).